We begin with the raw amino-acid sequence, 315 residues long: Glutathione synthetase (315 aa).

The ATP-grasp domain occupies 125 to 310 (KLFTAWFSDL…ITGMLMDAIE (186 aa)). Arginine 256 is a glycosylation site (N-beta-linked (GlcNAc) arginine). The Mg(2+) site is built by glutamate 281 and asparagine 283.

Belongs to the prokaryotic GSH synthase family. Requires Mg(2+) as cofactor. Mn(2+) is required as a cofactor. In terms of processing, glycosylation at Arg-256 by NleB enhances the glutathione synthetase activity, leading to an increase in glutathione production. Glycosylation may promote C.rodentium survival in oxidative stress conditions.

It carries out the reaction gamma-L-glutamyl-L-cysteine + glycine + ATP = glutathione + ADP + phosphate + H(+). It functions in the pathway sulfur metabolism; glutathione biosynthesis; glutathione from L-cysteine and L-glutamate: step 2/2. This is Glutathione synthetase from Citrobacter rodentium.